The sequence spans 717 residues: Probable metal-nicotianamine transporter YSL12 (717 aa).

Residues 1 to 56 form a disordered region; it reads MASHANASGGGGDEEMVEASTLRHRHGAGKDANGVGTERQLAAAAAEGEEEGPSSV. 14 helical membrane-spanning segments follow: residues 76 to 96, 99 to 119, 144 to 164, 186 to 206, 248 to 268, 306 to 326, 351 to 371, 422 to 442, 450 to 470, 482 to 502, 536 to 556, 593 to 613, 636 to 656, and 671 to 691; these read AFVV…KLNL, GIIP…VRLW, CVVA…LFGM, IGWM…ALVP, LGKF…YTAG, IVNV…WPLI, VFIS…KVLI, VAFG…PQIF, ILVA…GAGL, LAIF…LVGL, FVSQ…VFWL, LPKH…AINL, FYIG…LFVW, and VASG…ILAL.

It belongs to the YSL (TC 2.A.67.2) family. Expressed in root cortex and stele.

It localises to the membrane. In terms of biological role, may be involved in the transport of nicotianamine-chelated metals. This chain is Probable metal-nicotianamine transporter YSL12 (YSL12), found in Oryza sativa subsp. japonica (Rice).